The sequence spans 157 residues: Phosphopantetheine adenylyltransferase (157 aa).

Ser-9 serves as a coordination point for substrate. Residues Ser-9–Phe-10 and His-17 each bind ATP. Positions 41, 74, and 88 each coordinate substrate. ATP is bound by residues Gly-89–Arg-91, Glu-99, and Tyr-123–Ser-129.

It belongs to the bacterial CoaD family. Homohexamer. Requires Mg(2+) as cofactor.

The protein resides in the cytoplasm. It catalyses the reaction (R)-4'-phosphopantetheine + ATP + H(+) = 3'-dephospho-CoA + diphosphate. It functions in the pathway cofactor biosynthesis; coenzyme A biosynthesis; CoA from (R)-pantothenate: step 4/5. Reversibly transfers an adenylyl group from ATP to 4'-phosphopantetheine, yielding dephospho-CoA (dPCoA) and pyrophosphate. This chain is Phosphopantetheine adenylyltransferase, found in Micrococcus luteus (strain ATCC 4698 / DSM 20030 / JCM 1464 / CCM 169 / CCUG 5858 / IAM 1056 / NBRC 3333 / NCIMB 9278 / NCTC 2665 / VKM Ac-2230) (Micrococcus lysodeikticus).